Reading from the N-terminus, the 529-residue chain is Bifunctional purine biosynthesis protein PurH (529 aa).

The region spanning 2 to 149 (TDLVPLRRAL…KNHSFVTVLT (148 aa)) is the MGS-like domain.

It belongs to the PurH family.

It catalyses the reaction (6R)-10-formyltetrahydrofolate + 5-amino-1-(5-phospho-beta-D-ribosyl)imidazole-4-carboxamide = 5-formamido-1-(5-phospho-D-ribosyl)imidazole-4-carboxamide + (6S)-5,6,7,8-tetrahydrofolate. The enzyme catalyses IMP + H2O = 5-formamido-1-(5-phospho-D-ribosyl)imidazole-4-carboxamide. It functions in the pathway purine metabolism; IMP biosynthesis via de novo pathway; 5-formamido-1-(5-phospho-D-ribosyl)imidazole-4-carboxamide from 5-amino-1-(5-phospho-D-ribosyl)imidazole-4-carboxamide (10-formyl THF route): step 1/1. The protein operates within purine metabolism; IMP biosynthesis via de novo pathway; IMP from 5-formamido-1-(5-phospho-D-ribosyl)imidazole-4-carboxamide: step 1/1. The chain is Bifunctional purine biosynthesis protein PurH from Dinoroseobacter shibae (strain DSM 16493 / NCIMB 14021 / DFL 12).